Reading from the N-terminus, the 422-residue chain is 3-phosphoshikimate 1-carboxyvinyltransferase (422 aa).

3-phosphoshikimate contacts are provided by K24, S25, and R29. K24 contributes to the phosphoenolpyruvate binding site. Residues G93 and R121 each coordinate phosphoenolpyruvate. Residues S164, S165, Q166, E308, and H335 each contribute to the 3-phosphoshikimate site. Residue Q166 coordinates phosphoenolpyruvate. E308 serves as the catalytic Proton acceptor. Residues R339, R380, and K405 each contribute to the phosphoenolpyruvate site.

The protein belongs to the EPSP synthase family. In terms of assembly, monomer.

It localises to the cytoplasm. The enzyme catalyses 3-phosphoshikimate + phosphoenolpyruvate = 5-O-(1-carboxyvinyl)-3-phosphoshikimate + phosphate. It participates in metabolic intermediate biosynthesis; chorismate biosynthesis; chorismate from D-erythrose 4-phosphate and phosphoenolpyruvate: step 6/7. In terms of biological role, catalyzes the transfer of the enolpyruvyl moiety of phosphoenolpyruvate (PEP) to the 5-hydroxyl of shikimate-3-phosphate (S3P) to produce enolpyruvyl shikimate-3-phosphate and inorganic phosphate. This Saccharopolyspora erythraea (strain ATCC 11635 / DSM 40517 / JCM 4748 / NBRC 13426 / NCIMB 8594 / NRRL 2338) protein is 3-phosphoshikimate 1-carboxyvinyltransferase.